The following is a 168-amino-acid chain: Fusaric acid resistance protein FusE (168 aa).

Its function is as follows. Involved in the resistance (detoxification) of the fungal toxin fusaric acid. The protein is Fusaric acid resistance protein FusE (fusE) of Burkholderia cepacia (Pseudomonas cepacia).